A 1129-amino-acid chain; its full sequence is A-kinase anchor protein 11 (1129 aa).

A compositionally biased stretch (basic residues) spans 1–12 (MQKMQCHLRRPL). A disordered region spans residues 1-21 (MQKMQCHLRRPLHSSSSFSSQ). A phosphothreonine mark is found at Thr251 and Thr363. 3 disordered regions span residues 354–376 (IRDRNVIPDTPPSTPLVPSQTSS), 394–416 (EFAPATPPSTPHNSSVGSLSENE), and 434–455 (SEEVESSEGEEHPEMDVKSEHS). Residues 404–416 (PHNSSVGSLSENE) are compositionally biased toward polar residues. Phosphoserine occurs at positions 434, 439, and 440. The segment covering 442 to 455 (GEEHPEMDVKSEHS) has biased composition (basic and acidic residues). Ser595 is modified (phosphoserine). Phosphothreonine is present on Thr742. Phosphoserine is present on Ser835. The PKA-RII binding region stretch occupies residues 905 to 918 (LAEKIVAEAIEKAE). The interval 962-1061 (SKEVEDFQST…QEDGAEGLQP (100 aa)) is disordered. The span at 968 to 995 (FQSTESLGSQQMNLSVGEDSTGSWSNLS) shows a compositional bias: polar residues. Over residues 1002 to 1011 (DESSSFHHLS) the composition is skewed to basic and acidic residues. Over residues 1012 to 1028 (ESSNGNSSSWSSLGLEG) the composition is skewed to low complexity. Residues 1033 to 1042 (NNLSFPTSDS) are compositionally biased toward polar residues. Over residues 1043 to 1056 (DGPDDRESEQEDGA) the composition is skewed to acidic residues.

Expressed in brain and testis.

The protein localises to the peroxisome. Binds to type II regulatory subunits of protein kinase A and anchors/targets them. This Rattus norvegicus (Rat) protein is A-kinase anchor protein 11 (Akap11).